The chain runs to 242 residues: Protein fmp-52, mitochondrial (242 aa).

A mitochondrion-targeting transit peptide spans 1–87 (MSTSTPTSTA…VISSLGTTRV (87 aa)). Residues 33-58 (SSQVQTISRRAPANPTNSSRLSPTVN) are disordered. Positions 35-58 (QVQTISRRAPANPTNSSRLSPTVN) are enriched in polar residues.

It belongs to the FMP52 family.

The protein localises to the mitochondrion outer membrane. This chain is Protein fmp-52, mitochondrial (fmp-52), found in Neurospora crassa (strain ATCC 24698 / 74-OR23-1A / CBS 708.71 / DSM 1257 / FGSC 987).